An 841-amino-acid polypeptide reads, in one-letter code: Translation initiation factor IF-2 (841 aa).

Composition is skewed to basic and acidic residues over residues 1-12 (MSDNEIKNEAPK), 52-92 (ALKA…EATK), 114-170 (EQPK…REEA), 188-202 (READ…EANR), and 213-235 (KKGD…DVKG). Disordered regions lie at residues 1-24 (MSDN…KTTV) and 52-246 (ALKA…GSAL). The region spanning 340–510 (TRAPVVTIMG…LLQSEVLELT (171 aa)) is the tr-type G domain. The tract at residues 349–356 (GHVDHGKT) is G1. Position 349–356 (349–356 (GHVDHGKT)) interacts with GTP. Residues 374–378 (GITQH) are G2. A G3 region spans residues 396 to 399 (DTPG). GTP contacts are provided by residues 396–400 (DTPGH) and 450–453 (NKID). The segment at 450-453 (NKID) is G4. The G5 stretch occupies residues 486 to 488 (SAK).

It belongs to the TRAFAC class translation factor GTPase superfamily. Classic translation factor GTPase family. IF-2 subfamily.

The protein resides in the cytoplasm. Functionally, one of the essential components for the initiation of protein synthesis. Protects formylmethionyl-tRNA from spontaneous hydrolysis and promotes its binding to the 30S ribosomal subunits. Also involved in the hydrolysis of GTP during the formation of the 70S ribosomal complex. The protein is Translation initiation factor IF-2 of Actinobacillus pleuropneumoniae serotype 5b (strain L20).